Consider the following 1978-residue polypeptide: Dedicator of cytokinesis protein 4 (1978 aa).

Residues 6–67 (EHEKYGVVIA…PSSYVHLKNA (62 aa)) form the SH3 domain. Tyr167 is subject to Phosphotyrosine. Phosphothreonine is present on Thr193. In terms of domain architecture, C2 DOCK-type spans 401 to 574 (RNDLYITVER…ESFWITSFLC (174 aa)). A DOCKER domain is found at 1199–1605 (KTELNKEEMY…FGIQEFPACI (407 aa)). Phosphoserine is present on residues Ser1608, Ser1616, Ser1623, Ser1627, Ser1629, and Ser1640. Disordered regions lie at residues 1657–1738 (SQAS…IYPT) and 1751–1978 (IGDG…VSQL). A compositionally biased stretch (low complexity) spans 1681–1712 (PSPSTSSLSSTHSASPNVTSSAPSSARASPLL). The residue at position 1778 (Ser1778) is a Phosphoserine. The short motif at 1797–1803 (PPVPPRP) is the SH3-binding element. Polar residues predominate over residues 1804–1818 (TQTASPARHTTSVSP). The segment covering 1842-1872 (SPGLSSNSPVLSGSYSSGISSLSRCSTSETS) has biased composition (low complexity). A compositionally biased stretch (polar residues) spans 1873–1882 (GFENQANEQS). A compositionally biased stretch (pro residues) spans 1885-1895 (VPVPVPVPVPV). Residues 1953 to 1966 (SHLENGTRRTEPGP) show a composition bias toward basic and acidic residues.

Belongs to the DOCK family. As to quaternary structure, interacts with nucleotide-free Rap1; functions as a guanine nucleotide exchange factor (GEF) for Rap1. Interacts (via DOCKER domain) with RAC1; functions as a guanine nucleotide exchange factor (GEF) for RAC1. Interacts with the SH3 domain of CRK. Interacts with FASLG. Interacts with ELMO2 and EPHA2; mediates activation of RAC1 by EPHA2. Interacts with USH1C (via PDZ 1 domain). In terms of tissue distribution, expressed in inner ear (at protein level).

It is found in the cell membrane. The protein localises to the cytoplasm. Its subcellular location is the cytosol. In terms of biological role, functions as a guanine nucleotide exchange factor (GEF) that promotes the exchange of GDP to GTP, converting inactive GDP-bound small GTPases into their active GTP-bound form. Involved in regulation of adherens junction between cells. Plays a role in cell migration. Has a higher guanine nucleotide exchange factor activity compared to other isoforms. In Mus musculus (Mouse), this protein is Dedicator of cytokinesis protein 4 (Dock4).